The following is a 221-amino-acid chain: MCPLRSLLLISTLVLLHHLPHLSLGRSLPTTTASPGRSCLDYSQNLLRAVSNTLQKARQTLEFYSCTSEEIDHEDITKDKTSTVEACLPLELATNESCLASRETSFITNGRCLASGKTSFMTTLCLRSIYEDLKMYHVEFQAMNAKLLMDPKRQVFLDQNMLAAIAELMQALNFDSETVPQKPSLEELDFYKTKVKLCILLHAFRIRAVTIDRMMSYLSSS.

The N-terminal stretch at 1–25 (MCPLRSLLLISTLVLLHHLPHLSLG) is a signal peptide. Disulfide bonds link Cys39-Cys112, Cys66-Cys198, and Cys87-Cys125. The N-linked (GlcNAc...) asparagine glycan is linked to Asn95.

This sequence belongs to the IL-6 superfamily. As to quaternary structure, heterodimer with IL12B; disulfide-linked. This heterodimer is known as interleukin IL-12. Heterodimer with EBI3/IL27B; not disulfide-linked. This heterodimer is known as interleukin IL-35. Interacts with NBR1; this interaction promotes IL-12 secretion.

The protein resides in the secreted. Heterodimerizes with IL12B to form the IL-12 cytokine or with EBI3/IL27B to form the IL-35 cytokine. IL-12 is primarily produced by professional antigen-presenting cells (APCs) such as B-cells and dendritic cells (DCs) as well as macrophages and granulocytes and regulates T-cell and natural killer-cell responses, induces the production of interferon-gamma (IFN-gamma), favors the differentiation of T-helper 1 (Th1) cells and is an important link between innate resistance and adaptive immunity. Mechanistically, exerts its biological effects through a receptor composed of IL12R1 and IL12R2 subunits. Binding to the receptor results in the rapid tyrosine phosphorylation of a number of cellular substrates including the JAK family kinases TYK2 and JAK2. In turn, recruited STAT4 gets phosphorylated and translocates to the nucleus where it regulates cytokine/growth factor responsive genes. As part of IL-35, plays essential roles in maintaining the immune homeostasis of the liver microenvironment and also functions as an immune-suppressive cytokine. Mediates biological events through unconventional receptors composed of IL12RB2 and gp130/IL6ST heterodimers or homodimers. Signaling requires the transcription factors STAT1 and STAT4, which form a unique heterodimer that binds to distinct DNA sites. The chain is Interleukin-12 subunit alpha (IL12A) from Bubalus carabanensis (Swamp type water buffalo).